The sequence spans 617 residues: Neurosecretory protein VGF (617 aa).

An N-terminal signal peptide occupies residues 1-23 (MKTFTLPASVLFCFLLLIQGLGA). 3 disordered regions span residues 29–75 (PDVF…GELF), 93–204 (RPAS…ESPG), and 239–262 (SESAPLPETHQFGEGVSSPKTHLG). The span at 48 to 64 (AVSRPKDDGVPEVRAAR) shows a compositional bias: basic and acidic residues. Positions 149-160 (DPEEDDRSEELE) are enriched in acidic residues. Over residues 182–197 (ETAAAETETRTHTLTR) the composition is skewed to low complexity. Residue Gln313 is modified to Pyrrolidone carboxylic acid. Basic and acidic residues predominate over residues 345–364 (RQRDLGGRELQETQQERENE). The disordered stretch occupies residues 345–599 (RQRDLGGREL…EEADAEERRL (255 aa)). Positions 378–397 (EDDVGEEDEEAAEAEAEAEE) are enriched in acidic residues. Residues 418–436 (AEDKRSQEEAPGHRRKDAE) are compositionally biased toward basic and acidic residues. At Ser423 the chain carries Phosphoserine. The segment covering 437–452 (GAEEGGEEDDDDEEMD) has biased composition (acidic residues). Residues 491–501 (PPEPVPPPRAA) show a composition bias toward pro residues. Residues 577–599 (HHPDLEAQARRAQEEADAEERRL) show a composition bias toward basic and acidic residues.

Interacts with HSPA8 on cell membrane. Interacts with C3AR1. Interacts with C1QBP.

It is found in the secreted. The protein resides in the cytoplasmic vesicle. The protein localises to the secretory vesicle. Secreted polyprotein that is packaged and proteolytically processed by prohormone convertases PCSK1 and PCSK2 in a cell-type-specific manner. VGF and peptides derived from its processing play many roles in neurogenesis and neuroplasticity associated with learning, memory, depression and chronic pain. In terms of biological role, plays a role in the control of body fluid homeostasis by regulating vasopressin release. Suppresses presynaptic glutamatergic neurons connected to vasopressin neurons. Functionally, plays a role in the control of body fluid homeostasis by regulating vasopressin release. Activates GABAergic interneurons which are inhibitory neurons of the nervous system and thereby suppresses presynaptic glutamatergic neurons. Also stimulates feeding behavior in an orexin-dependent manner in the hypothalamus. Functions as a positive regulator for the activation of orexin neurons resulting in elevated gastric acid secretion and gastric emptying. Its function is as follows. Secreted multifunctional peptide that interacts with different receptors and thereby plays multiple physiological roles including modulation of energy expenditure, pain, response to stress, gastric regulation as well as lipolysis. Activates the G-protein-coupled receptor C3AR1 via a folding-upon-binding mechanism leading to enhanced lipolysis in adipocytes. Interacts with gC1qR receptor in macrophages and microglia causing increased levels of intracellular calcium and hypersensitivity. Plays a role in the regulation of memory formation and depression-related behaviors potentially by influencing synaptic plasticity and neurogenesis. Induces acute and transient activation of the NTRK2/TRKB receptor and subsequent CREB phosphorylation. Also induces insulin secretion in insulinoma cells by increasing intracellular calcium mobilization. The protein is Neurosecretory protein VGF of Mus musculus (Mouse).